The chain runs to 432 residues: Acyl-coenzyme A thioesterase 3 (432 aa).

Residues Ser243, Asp337, and His371 each act as charge relay system in the active site. The short motif at 430-432 is the Microbody targeting signal element; that stretch reads AKL.

It belongs to the C/M/P thioester hydrolase family. As to expression, widely expressed. Highly expressed in the kidney, expressed at low level in the liver. Isoform 2 is expressed in the kidney, but not in the liver. Isoform 1 is liver-specific. Highly expressed in kidney (at protein level).

It localises to the peroxisome. The catalysed reaction is hexadecanoyl-CoA + H2O = hexadecanoate + CoA + H(+). It catalyses the reaction decanoyl-CoA + H2O = decanoate + CoA + H(+). It carries out the reaction dodecanoyl-CoA + H2O = dodecanoate + CoA + H(+). The enzyme catalyses tetradecanoyl-CoA + H2O = tetradecanoate + CoA + H(+). The catalysed reaction is octadecanoyl-CoA + H2O = octadecanoate + CoA + H(+). It catalyses the reaction eicosanoyl-CoA + H2O = eicosanoate + CoA + H(+). It carries out the reaction (9Z)-octadecenoyl-CoA + H2O = (9Z)-octadecenoate + CoA + H(+). The enzyme catalyses (9Z,12Z)-octadecadienoyl-CoA + H2O = (9Z,12Z)-octadecadienoate + CoA + H(+). The catalysed reaction is (5Z,8Z,11Z,14Z)-eicosatetraenoyl-CoA + H2O = (5Z,8Z,11Z,14Z)-eicosatetraenoate + CoA + H(+). It catalyses the reaction tetracosanoyl-CoA + H2O = tetracosanoate + CoA + H(+). It carries out the reaction hexacosanoyl-CoA + H2O = hexacosanoate + CoA + H(+). The enzyme catalyses docosanoyl-CoA + H2O = docosanoate + CoA + H(+). The catalysed reaction is (9Z)-hexadecenoyl-CoA + H2O = (9Z)-hexadecenoate + CoA + H(+). It functions in the pathway lipid metabolism; fatty acid metabolism. Functionally, catalyzes the hydrolysis of acyl-CoAs into free fatty acids and coenzyme A (CoASH), regulating their respective intracellular levels. Mainly active on long-chain acyl-CoAs. May have a function in termination of beta-oxidation of fatty acids. This chain is Acyl-coenzyme A thioesterase 3 (Acot3), found in Mus musculus (Mouse).